The chain runs to 87 residues: U3-theraphotoxin-Hhn1a 2 (87 aa).

The N-terminal stretch at 1-24 (MVNMKASMFLTFAGLVLLFVVCYA) is a signal peptide. Positions 25-52 (SESEEKEFPKEMLSSIFAVDDDFKQEER) are excised as a propeptide. Cystine bridges form between cysteine 54–cysteine 67, cysteine 61–cysteine 72, and cysteine 66–cysteine 79.

This sequence belongs to the neurotoxin 10 (Hwtx-1) family. 51 (Hntx-8) subfamily. Hntx-8 sub-subfamily. In terms of tissue distribution, expressed by the venom gland.

The protein localises to the secreted. Its function is as follows. Ion channel inhibitor. The sequence is that of U3-theraphotoxin-Hhn1a 2 from Cyriopagopus hainanus (Chinese bird spider).